A 202-amino-acid polypeptide reads, in one-letter code: ATP synthase subunit b 1 (202 aa).

A helical membrane pass occupies residues 17-37 (IAAVLCFSVLVPLVAMAAEGG).

It belongs to the ATPase B chain family. In terms of assembly, F-type ATPases have 2 components, F(1) - the catalytic core - and F(0) - the membrane proton channel. F(1) has five subunits: alpha(3), beta(3), gamma(1), delta(1), epsilon(1). F(0) has three main subunits: a(1), b(2) and c(10-14). The alpha and beta chains form an alternating ring which encloses part of the gamma chain. F(1) is attached to F(0) by a central stalk formed by the gamma and epsilon chains, while a peripheral stalk is formed by the delta and b chains.

Its subcellular location is the cell inner membrane. F(1)F(0) ATP synthase produces ATP from ADP in the presence of a proton or sodium gradient. F-type ATPases consist of two structural domains, F(1) containing the extramembraneous catalytic core and F(0) containing the membrane proton channel, linked together by a central stalk and a peripheral stalk. During catalysis, ATP synthesis in the catalytic domain of F(1) is coupled via a rotary mechanism of the central stalk subunits to proton translocation. In terms of biological role, component of the F(0) channel, it forms part of the peripheral stalk, linking F(1) to F(0). In Syntrophus aciditrophicus (strain SB), this protein is ATP synthase subunit b 1.